Here is a 488-residue protein sequence, read N- to C-terminus: MAPAATASTGTKGIVRQVIGPVLDVEFPAGKLPKILNALRIEGKNPAGQDIGLTAEVQQLLGDHRVRAVAMSGTDGLVRGMEAVDTGAPISVPVGEATLGRIFNVLGEPVDEQGPIKSSTTSPIHRSAPKLTDLETKPKVFETGIKVIDLLAPYRQGGKVGLFGGAGVGKTVLIQELINNIAKEHGGVSVFGGVGERTREGNDLYEEFKESGVINADNLTESKVALCFGQMNEPPGARMRVGLSALTMAEHFRDVNKQDVLLFIDNIFRFVQAGSEVSALLGRMPSAVGYQPTLGTDVGELQERITSTLEGSITSIQAVYVPADDLTDPAPATTFAHLDATTVLARALAAKGIYPAVDPLDSTSTMLQPAVVGDEHYRTARAVQSTLQRYKELQDIIAILGLDELSEEDRKTFDRARKIEKFLSQPFFVAEIFTGMSGKYVKLEETIAGFNMILSGELDNLPEQAFYLVGNIEEVKAKAQKINSENKG.

Residue 164–171 participates in ATP binding; it reads GGAGVGKT.

The protein belongs to the ATPase alpha/beta chains family. As to quaternary structure, F-type ATPases have 2 components, CF(1) - the catalytic core - and CF(0) - the membrane proton channel. CF(1) has five subunits: alpha(3), beta(3), gamma(1), delta(1), epsilon(1). CF(0) has four main subunits: a(1), b(1), b'(1) and c(9-12).

Its subcellular location is the cellular thylakoid membrane. It carries out the reaction ATP + H2O + 4 H(+)(in) = ADP + phosphate + 5 H(+)(out). Its function is as follows. Produces ATP from ADP in the presence of a proton gradient across the membrane. The catalytic sites are hosted primarily by the beta subunits. In Prochlorococcus marinus (strain MIT 9211), this protein is ATP synthase subunit beta.